A 58-amino-acid polypeptide reads, in one-letter code: Potassium channel toxin Ts16 (58 aa).

The signal sequence occupies residues 1-16; the sequence is MHSSVFILILFSLAVI. Intrachain disulfides connect Cys29–Cys51, Cys34–Cys47, and Cys38–Cys53.

As to expression, expressed by the venom gland.

It is found in the secreted. Its function is as follows. Blocks potassium channels. The chain is Potassium channel toxin Ts16 from Tityus serrulatus (Brazilian scorpion).